We begin with the raw amino-acid sequence, 419 residues long: UDP-N-acetylglucosamine 1-carboxyvinyltransferase (419 aa).

22–23 provides a ligand contact to phosphoenolpyruvate; sequence KN. Arg-95 provides a ligand contact to UDP-N-acetyl-alpha-D-glucosamine. Residue Cys-119 is the Proton donor of the active site. Cys-119 bears the 2-(S-cysteinyl)pyruvic acid O-phosphothioketal mark. Residues 164-167, Asp-308, and Ile-330 each bind UDP-N-acetyl-alpha-D-glucosamine; that span reads KVSV.

This sequence belongs to the EPSP synthase family. MurA subfamily.

It localises to the cytoplasm. The enzyme catalyses phosphoenolpyruvate + UDP-N-acetyl-alpha-D-glucosamine = UDP-N-acetyl-3-O-(1-carboxyvinyl)-alpha-D-glucosamine + phosphate. The protein operates within cell wall biogenesis; peptidoglycan biosynthesis. Cell wall formation. Adds enolpyruvyl to UDP-N-acetylglucosamine. The polypeptide is UDP-N-acetylglucosamine 1-carboxyvinyltransferase (Rickettsia prowazekii (strain Madrid E)).